A 194-amino-acid chain; its full sequence is Mersacidin decarboxylase (194 aa).

H75 is an active-site residue.

This sequence belongs to the HFCD (homooligomeric flavin containing Cys decarboxylase) superfamily. As to quaternary structure, homododecamer. FAD serves as cofactor.

It functions in the pathway antibiotic biosynthesis; mersacidin biosynthesis. Functionally, catalyzes the oxidative decarboxylation of the C-terminal cysteine residue of mersacidin to an aminoenethiol residue. The polypeptide is Mersacidin decarboxylase (mrsD) (Bacillus sp. (strain HIL-Y85/54728)).